The primary structure comprises 483 residues: Beta-glucosidase 4 (483 aa).

Residues Q29, H131, 176–177 (NE), Y310, and E380 contribute to the a beta-D-glucoside site. E177 serves as the catalytic Proton donor. E380 (nucleophile) is an active-site residue. N-linked (GlcNAc...) asparagine glycosylation is present at N398. Residues W429, 436 to 437 (EW), and F445 contribute to the a beta-D-glucoside site.

It belongs to the glycosyl hydrolase 1 family.

It catalyses the reaction Hydrolysis of terminal, non-reducing beta-D-glucosyl residues with release of beta-D-glucose.. The sequence is that of Beta-glucosidase 4 (BGLU4) from Oryza sativa subsp. japonica (Rice).